A 345-amino-acid chain; its full sequence is Uroporphyrinogen decarboxylase (345 aa).

Residues 24–28 (RQAGR), D74, Y150, S205, and H318 each bind substrate.

It belongs to the uroporphyrinogen decarboxylase family. In terms of assembly, homodimer.

The protein resides in the cytoplasm. It catalyses the reaction uroporphyrinogen III + 4 H(+) = coproporphyrinogen III + 4 CO2. It functions in the pathway porphyrin-containing compound metabolism; protoporphyrin-IX biosynthesis; coproporphyrinogen-III from 5-aminolevulinate: step 4/4. In terms of biological role, catalyzes the decarboxylation of four acetate groups of uroporphyrinogen-III to yield coproporphyrinogen-III. In Dichelobacter nodosus (strain VCS1703A), this protein is Uroporphyrinogen decarboxylase.